Here is a 396-residue protein sequence, read N- to C-terminus: Phosphoglycerate kinase (396 aa).

Substrate contacts are provided by residues 21 to 23 (DFN), arginine 36, 59 to 62 (HLGK), arginine 119, and arginine 156. Residues lysine 206, glycine 294, glutamate 325, and 352 to 355 (GGDS) each bind ATP.

It belongs to the phosphoglycerate kinase family. Monomer.

It localises to the cytoplasm. The enzyme catalyses (2R)-3-phosphoglycerate + ATP = (2R)-3-phospho-glyceroyl phosphate + ADP. It functions in the pathway carbohydrate degradation; glycolysis; pyruvate from D-glyceraldehyde 3-phosphate: step 2/5. The protein is Phosphoglycerate kinase of Listeria monocytogenes serovar 1/2a (strain ATCC BAA-679 / EGD-e).